A 36-amino-acid polypeptide reads, in one-letter code: Potassium channel toxin alpha-KTx 16.9 (36 aa).

Disulfide bonds link Cys7/Cys28, Cys13/Cys33, and Cys17/Cys35.

The protein belongs to the short scorpion toxin superfamily. Potassium channel inhibitor family. Alpha-KTx 16 subfamily. Expressed by the venom gland.

It localises to the secreted. Poorly competes with (125)I-kaliotoxin binding on rat brain synaptosome (IC(50)&gt;100 nM). Is a poor Kv1.3/KCNA3 ligand. May have as real target KCa1.1/KCNMA1 channel. Shows weak toxicity on mice. The sequence is that of Potassium channel toxin alpha-KTx 16.9 from Buthus paris (Scorpion).